A 418-amino-acid polypeptide reads, in one-letter code: S-adenosylmethionine synthase (418 aa).

His-16 is a binding site for ATP. Residue Asp-18 participates in Mg(2+) binding. Glu-44 serves as a coordination point for K(+). Residues Glu-57 and Gln-100 each coordinate L-methionine. Positions 100–110 (QSPDISQGVTK) are flexible loop. ATP contacts are provided by residues 175-177 (DGK), 251-252 (KF), Asp-260, 266-267 (RK), Ala-283, and Lys-287. Asp-260 contributes to the L-methionine binding site. Lys-291 is a binding site for L-methionine.

This sequence belongs to the AdoMet synthase family. As to quaternary structure, homotetramer; dimer of dimers. Mg(2+) serves as cofactor. The cofactor is K(+).

It localises to the cytoplasm. It carries out the reaction L-methionine + ATP + H2O = S-adenosyl-L-methionine + phosphate + diphosphate. Its pathway is amino-acid biosynthesis; S-adenosyl-L-methionine biosynthesis; S-adenosyl-L-methionine from L-methionine: step 1/1. Its function is as follows. Catalyzes the formation of S-adenosylmethionine (AdoMet) from methionine and ATP. The overall synthetic reaction is composed of two sequential steps, AdoMet formation and the subsequent tripolyphosphate hydrolysis which occurs prior to release of AdoMet from the enzyme. The chain is S-adenosylmethionine synthase from Gloeothece citriformis (strain PCC 7424) (Cyanothece sp. (strain PCC 7424)).